A 499-amino-acid polypeptide reads, in one-letter code: Probable cytosol aminopeptidase (499 aa).

The Mn(2+) site is built by Lys-263 and Asp-268. Lys-275 is an active-site residue. The Mn(2+) site is built by Asp-286, Asp-345, and Glu-347. The active site involves Arg-349.

It belongs to the peptidase M17 family. Mn(2+) serves as cofactor.

It localises to the cytoplasm. It carries out the reaction Release of an N-terminal amino acid, Xaa-|-Yaa-, in which Xaa is preferably Leu, but may be other amino acids including Pro although not Arg or Lys, and Yaa may be Pro. Amino acid amides and methyl esters are also readily hydrolyzed, but rates on arylamides are exceedingly low.. It catalyses the reaction Release of an N-terminal amino acid, preferentially leucine, but not glutamic or aspartic acids.. Functionally, presumably involved in the processing and regular turnover of intracellular proteins. Catalyzes the removal of unsubstituted N-terminal amino acids from various peptides. The sequence is that of Probable cytosol aminopeptidase from Chlamydia caviae (strain ATCC VR-813 / DSM 19441 / 03DC25 / GPIC) (Chlamydophila caviae).